The sequence spans 1005 residues: Mitogen-activated protein kinase kinase kinase 10 (1005 aa).

The SH3 domain occupies 32-96; it reads VSNPLWMAVF…PSNYVVSDDK (65 aa). The 263-residue stretch at 118-380 folds into the Protein kinase domain; sequence LNLDEIIGVG…SCILEQLTTI (263 aa). Residues 124 to 132 and Lys-145 contribute to the ATP site; that span reads IGVGGFGKV. Asp-242 acts as the Proton acceptor in catalysis. 2 leucine-zipper regions span residues 404–425 and 439–460; these read IQQM…EEEL and LKRR…ELNI. Disordered regions lie at residues 551–611, 647–676, 712–736, and 758–940; these read SVLK…KHTP, QSDH…QSRR, FQWA…GEDS, and RSLI…AEGA. 2 stretches are compositionally biased toward basic and acidic residues: residues 576 to 588 and 648 to 658; these read QKER…RLKT and SDHRSHPEDTA. 2 stretches are compositionally biased toward basic and acidic residues: residues 761–786 and 799–809; these read IRSD…EDRG and YKVESFKRDPK. Polar residues predominate over residues 810-826; it reads QSLTPTHVTVGRNNTTE. Pro residues predominate over residues 862–879; it reads EPSPFPRLPDPHFVFPPP. Positions 915-940 are enriched in low complexity; sequence SLSQTHSSSPSSGGGDACSSGSAEGA.

It belongs to the protein kinase superfamily. STE Ser/Thr protein kinase family. MAP kinase kinase kinase subfamily. As to quaternary structure, homodimer. Binds to the GTPase rac1 but not cdc42 or rhoA. Interacts (via kinase domain) with pak1 (via kinase domain). Interacts with the ubiquitin-conjugating enzyme ube2d4. Mg(2+) serves as cofactor. In terms of processing, autophosphorylation on serine and threonine residues within the activation loop plays a role in enzyme activation. Mono- and poly-ubiquitinated. In adults, strongly expressed in the brain and spleen with lower levels in pancreas, heart, muscle and kidney (at protein level). In the developing embryo, expressed at stage 22 in the cement gland. Weakly expressed in the pronephros from stage 24 or 25, with expression increasing in strength by stage 30 and continuing at least until stage 37. Expression in the developing pronephros correlates with epithelialization of the proximal pronephric tubules.

The catalysed reaction is L-seryl-[protein] + ATP = O-phospho-L-seryl-[protein] + ADP + H(+). It carries out the reaction L-threonyl-[protein] + ATP = O-phospho-L-threonyl-[protein] + ADP + H(+). Its activity is regulated as follows. Homodimerization via the leucine zipper domains is required for autophosphorylation and subsequent activation. Activates the JUN N-terminal pathway. Essential for pronephros and cement gland development. This Xenopus laevis (African clawed frog) protein is Mitogen-activated protein kinase kinase kinase 10 (map3k10).